We begin with the raw amino-acid sequence, 152 residues long: SsrA-binding protein (152 aa).

The protein belongs to the SmpB family.

It is found in the cytoplasm. In terms of biological role, required for rescue of stalled ribosomes mediated by trans-translation. Binds to transfer-messenger RNA (tmRNA), required for stable association of tmRNA with ribosomes. tmRNA and SmpB together mimic tRNA shape, replacing the anticodon stem-loop with SmpB. tmRNA is encoded by the ssrA gene; the 2 termini fold to resemble tRNA(Ala) and it encodes a 'tag peptide', a short internal open reading frame. During trans-translation Ala-aminoacylated tmRNA acts like a tRNA, entering the A-site of stalled ribosomes, displacing the stalled mRNA. The ribosome then switches to translate the ORF on the tmRNA; the nascent peptide is terminated with the 'tag peptide' encoded by the tmRNA and targeted for degradation. The ribosome is freed to recommence translation, which seems to be the essential function of trans-translation. This Helicobacter acinonychis (strain Sheeba) protein is SsrA-binding protein.